The sequence spans 469 residues: 3-isopropylmalate dehydratase large subunit (469 aa).

Residues Cys350, Cys410, and Cys413 each coordinate [4Fe-4S] cluster.

The protein belongs to the aconitase/IPM isomerase family. LeuC type 1 subfamily. As to quaternary structure, heterodimer of LeuC and LeuD. [4Fe-4S] cluster is required as a cofactor.

It carries out the reaction (2R,3S)-3-isopropylmalate = (2S)-2-isopropylmalate. It participates in amino-acid biosynthesis; L-leucine biosynthesis; L-leucine from 3-methyl-2-oxobutanoate: step 2/4. Functionally, catalyzes the isomerization between 2-isopropylmalate and 3-isopropylmalate, via the formation of 2-isopropylmaleate. The polypeptide is 3-isopropylmalate dehydratase large subunit (Chelativorans sp. (strain BNC1)).